Reading from the N-terminus, the 453-residue chain is DNA repair protein RadA (453 aa).

The C4-type zinc-finger motif lies at 10–27 (CQECGYQSPKYLGRCPNC). 95–102 (GDPGIGKS) contributes to the ATP binding site. The RadA KNRFG motif signature appears at 251-255 (KNRFG). Positions 350–453 (DAYLKSAGGV…VGQVLKAVFS (104 aa)) are lon-protease-like.

The protein belongs to the RecA family. RadA subfamily.

Its function is as follows. DNA-dependent ATPase involved in processing of recombination intermediates, plays a role in repairing DNA breaks. Stimulates the branch migration of RecA-mediated strand transfer reactions, allowing the 3' invading strand to extend heteroduplex DNA faster. Binds ssDNA in the presence of ADP but not other nucleotides, has ATPase activity that is stimulated by ssDNA and various branched DNA structures, but inhibited by SSB. Does not have RecA's homology-searching function. This is DNA repair protein RadA from Streptococcus pyogenes serotype M3 (strain ATCC BAA-595 / MGAS315).